Consider the following 335-residue polypeptide: MIDAKSEHKIAPWKIEEVNALKELLKSTSIIALIDMMEVPAVQLQEIRDKIRDQMTLKMSRNTLMKRAIEEVAEETGNPEFAKLADYLDKGAAIIATEMNPFKLFKTLDESKSPAPVKGGATAPCDIEVKAGSTGMPPGPFLSELKAVGIPAAIDKGKIGIKEDKVVIKEGEVVSQKLAVVLSALGIKPVTVGLNVLGVYEDGVIYTESELRIDEEEFIGKIQKAYTSAFNLSVNAVIPTSATVETIVQKAFNDAKAVSVESAFVTDKTADAILGKAYAQMIAVAGLASDDALDEELKEKISSGAAAPVEEAPVEEKKEEKKEEAAPAAGLGMLF.

The interval 304 to 335 is disordered; it reads GAAAPVEEAPVEEKKEEKKEEAAPAAGLGMLF. The segment covering 314 to 325 has biased composition (basic and acidic residues); that stretch reads VEEKKEEKKEEA.

The protein belongs to the universal ribosomal protein uL10 family. In terms of assembly, part of the 50S ribosomal subunit. Forms part of the ribosomal stalk which helps the ribosome interact with GTP-bound translation factors. Forms a heptameric L10(L12)2(L12)2(L12)2 complex, where L10 forms an elongated spine to which the L12 dimers bind in a sequential fashion.

In terms of biological role, forms part of the ribosomal stalk, playing a central role in the interaction of the ribosome with GTP-bound translation factors. This chain is Large ribosomal subunit protein uL10, found in Methanococcus maripaludis (strain C6 / ATCC BAA-1332).